The primary structure comprises 307 residues: Protein ORANGE, chloroplastic (307 aa).

Residues 1 to 55 (MSSLGRILSVSYPPDPYTWRFSQYKLSSSLGRNRRLRWRFTALDPESSSLDSESS) constitute a chloroplast transit peptide. Lys-58 is covalently cross-linked (Glycyl lysine isopeptide (Lys-Gly) (interchain with G-Cter in ubiquitin)). 2 helical membrane-spanning segments follow: residues 146 to 166 (VYYA…GLLA) and 199 to 219 (IVAS…VVEV). The interval 208–299 (VGVISALMVV…CTGMAMASEH (92 aa)) is CR-type-like. The CXXCXGXG motif repeat unit spans residues 230–237 (CKYCLGTG). The stretch at 241–248 (CARCSSTG) is one CXXCXXXG motif repeat. Residues 274–281 (CSNCSGAG) form a CXXCXGXG motif repeat. Residues 285 to 292 (CPTCLCTG) form a CXXCXXXG motif repeat.

Belongs to the orange-like family. Interacts with the phytoene synthase PSY1 in chloroplast. Binds to the eukaryotic release factor eRF1-2. Interacts with the transcription factor TCP14 in the nucleus to repress chloroplast biogenesis in etiolated seedlings. Associates to the E2 ubiquitin-conjugating enzyme UBC19. In terms of processing, ubiquitination at K-58 by UBC19 is essential for nuclear localization.

It is found in the plastid. Its subcellular location is the chloroplast membrane. The protein localises to the nucleus. It localises to the cytoplasm. Functionally, involved in chromoplast differentiation. Associated with a cellular process that triggers the differentiation of pro-plastids or other non-colored plastids into chromoplasts for carotenoid accumulation. Is associated with carotenoid accumulation in chromoplasts. Functions as a major regulator of the phytoene synthase PSY1 protein level and activity. Modulates carotenoid biosynthesis by means of post-transcriptional regulation of PSY1. Modulates carotenoid biosynthesis in part by up-regulating a series of endogenous carotenogenic genes. Regulates cell elongation in the petiole in an eRF1-2-dependent manner. Binds to and represses TCP14 transactivation activity, thus preventing early light-induced proteins (ELIPs, e.g. ELIP1 and ELIP2) expression and delaying chloroplast biogenesis (e.g. lower chlorophyll biosynthesis and slower development of thylakoid membranes) in germinating cotyledons and etiolated seedlings; reduced levels upon illumination combined to TCP14 accumulation derepress chloroplast biogenesis during deetiolation. This chain is Protein ORANGE, chloroplastic, found in Arabidopsis thaliana (Mouse-ear cress).